The primary structure comprises 103 residues: Small ribosomal subunit protein uS10 (103 aa).

It belongs to the universal ribosomal protein uS10 family. Part of the 30S ribosomal subunit.

Its function is as follows. Involved in the binding of tRNA to the ribosomes. This Tolumonas auensis (strain DSM 9187 / NBRC 110442 / TA 4) protein is Small ribosomal subunit protein uS10.